The following is a 248-amino-acid chain: DNA repair protein RecO (248 aa).

This sequence belongs to the RecO family.

Involved in DNA repair and RecF pathway recombination. This chain is DNA repair protein RecO, found in Rubrobacter xylanophilus (strain DSM 9941 / JCM 11954 / NBRC 16129 / PRD-1).